The chain runs to 175 residues: Apoptosis regulator Bcl-2 homolog (175 aa).

The short motif at 75 to 94 (QVLEDKINWGRIITIIAFCA) is the BH1 element. The BH2 motif lies at 105-120 (SPQYYDGIISEAITDA).

It belongs to the Bcl-2 family. Interacts with host BAX; this interaction inhibits BAX oligomerization and subsequent activation. Interacts with host BAK1.

It localises to the host mitochondrion. Plays a role in the inhibition of host apoptosis by sequestering and inactivating multiple proapoptotic BCL-2 proteins, including BAK1 and BAX. The sequence is that of Apoptosis regulator Bcl-2 homolog from Vertebrata (FPV).